The chain runs to 207 residues: Recombination protein RecR (207 aa).

The C4-type zinc finger occupies 60–75 (CRRCHNISDSGVCTIC). The region spanning 83 to 178 (STLCVVENIR…RVSVIARGIA (96 aa)) is the Toprim domain.

It belongs to the RecR family.

Its function is as follows. May play a role in DNA repair. It seems to be involved in an RecBC-independent recombinational process of DNA repair. It may act with RecF and RecO. This Porphyromonas gingivalis (strain ATCC 33277 / DSM 20709 / CIP 103683 / JCM 12257 / NCTC 11834 / 2561) protein is Recombination protein RecR.